We begin with the raw amino-acid sequence, 487 residues long: Betaine aldehyde dehydrogenase (487 aa).

Positions 26 and 93 each coordinate K(+). 150–152 (GAW) provides a ligand contact to NAD(+). K162 serves as the catalytic Charge relay system. NAD(+) is bound by residues 176-179 (KPSE) and 229-232 (SVPT). Position 244 (L244) interacts with K(+). E250 (proton acceptor) is an active-site residue. NAD(+) contacts are provided by G252, C284, and E384. The active-site Nucleophile is C284. C284 is modified (cysteine sulfenic acid (-SOH)). Positions 454 and 457 each coordinate K(+). The active-site Charge relay system is E461.

Belongs to the aldehyde dehydrogenase family. Dimer of dimers. The cofactor is K(+).

The enzyme catalyses betaine aldehyde + NAD(+) + H2O = glycine betaine + NADH + 2 H(+). It participates in amine and polyamine biosynthesis; betaine biosynthesis via choline pathway; betaine from betaine aldehyde: step 1/1. In terms of biological role, involved in the biosynthesis of the osmoprotectant glycine betaine. Catalyzes the irreversible oxidation of betaine aldehyde to the corresponding acid. The polypeptide is Betaine aldehyde dehydrogenase (Rhizobium johnstonii (strain DSM 114642 / LMG 32736 / 3841) (Rhizobium leguminosarum bv. viciae)).